Reading from the N-terminus, the 255-residue chain is Indole-3-glycerol phosphate synthase (255 aa).

This sequence belongs to the TrpC family.

It carries out the reaction 1-(2-carboxyphenylamino)-1-deoxy-D-ribulose 5-phosphate + H(+) = (1S,2R)-1-C-(indol-3-yl)glycerol 3-phosphate + CO2 + H2O. The protein operates within amino-acid biosynthesis; L-tryptophan biosynthesis; L-tryptophan from chorismate: step 4/5. This Streptococcus pneumoniae (strain 70585) protein is Indole-3-glycerol phosphate synthase.